The following is a 345-amino-acid chain: L-threonine 3-dehydrogenase (345 aa).

Cys42 provides a ligand contact to Zn(2+). Catalysis depends on charge relay system residues Thr44 and His47. 6 residues coordinate Zn(2+): His67, Glu68, Cys97, Cys100, Cys103, and Cys111. Residues Ile179, Asp199, Arg204, Leu266–Ile268, and Ile290–Tyr291 each bind NAD(+).

Belongs to the zinc-containing alcohol dehydrogenase family. In terms of assembly, homotetramer. Zn(2+) is required as a cofactor.

The protein resides in the cytoplasm. It carries out the reaction L-threonine + NAD(+) = (2S)-2-amino-3-oxobutanoate + NADH + H(+). It functions in the pathway amino-acid degradation; L-threonine degradation via oxydo-reductase pathway; glycine from L-threonine: step 1/2. In terms of biological role, catalyzes the NAD(+)-dependent oxidation of L-threonine to 2-amino-3-ketobutyrate. The polypeptide is L-threonine 3-dehydrogenase (Rhizobium rhizogenes (strain K84 / ATCC BAA-868) (Agrobacterium radiobacter)).